A 119-amino-acid polypeptide reads, in one-letter code: Protein MRP-126 (119 aa).

EF-hand domains are found at residues 23 to 58 and 59 to 94; these read DVFH…LKHV and KNQV…VTVA. The Ca(2+) site is built by Thr-37, Glu-42, Asp-72, Asn-74, Asp-76, Gln-78, and Glu-83.

Belongs to the S-100 family. As to expression, expressed in v-myb-transformed myelomonocytic cells.

The polypeptide is Protein MRP-126 (Gallus gallus (Chicken)).